The primary structure comprises 637 residues: Chaperone protein DnaK (637 aa).

At Thr196 the chain carries Phosphothreonine; by autocatalysis. Residues Ala598–Lys637 are disordered. A compositionally biased stretch (acidic residues) spans Ala627–Lys637.

This sequence belongs to the heat shock protein 70 family.

Functionally, acts as a chaperone. This chain is Chaperone protein DnaK, found in Chlorobium luteolum (strain DSM 273 / BCRC 81028 / 2530) (Pelodictyon luteolum).